A 132-amino-acid polypeptide reads, in one-letter code: Small ribosomal subunit protein uS8 (132 aa).

Belongs to the universal ribosomal protein uS8 family. As to quaternary structure, part of the 30S ribosomal subunit. Contacts proteins S5 and S12.

Its function is as follows. One of the primary rRNA binding proteins, it binds directly to 16S rRNA central domain where it helps coordinate assembly of the platform of the 30S subunit. This Leuconostoc citreum (strain KM20) protein is Small ribosomal subunit protein uS8.